A 298-amino-acid chain; its full sequence is Cyanophycinase (298 aa).

Residues Ser-155, Glu-173, and His-197 each act as charge relay system in the active site.

This sequence belongs to the peptidase S51 family.

It carries out the reaction [L-4-(L-arginin-2-N-yl)aspartate](n) + H2O = [L-4-(L-arginin-2-N-yl)aspartate](n-1) + L-4-(L-arginin-2-N-yl)aspartate. Functionally, exopeptidase that catalyzes the hydrolytic cleavage of multi-L-arginyl-poly-L-aspartic acid (cyanophycin; a water-insoluble reserve polymer) into aspartate-arginine dipeptides. The polypeptide is Cyanophycinase (cphB) (Trichormus variabilis (strain ATCC 29413 / PCC 7937) (Anabaena variabilis)).